Consider the following 382-residue polypeptide: Alkanesulfonate monooxygenase (382 aa).

It belongs to the SsuD family.

It catalyses the reaction an alkanesulfonate + FMNH2 + O2 = an aldehyde + FMN + sulfite + H2O + 2 H(+). Functionally, catalyzes the desulfonation of aliphatic sulfonates. In Pseudomonas entomophila (strain L48), this protein is Alkanesulfonate monooxygenase.